Consider the following 443-residue polypeptide: 3-phosphoshikimate 1-carboxyvinyltransferase (443 aa).

Residues Lys25, Ser26, and Arg30 each coordinate 3-phosphoshikimate. Lys25 is a binding site for phosphoenolpyruvate. Positions 117 and 145 each coordinate phosphoenolpyruvate. Residues Ser188, Ser189, Gln190, Ser217, Glu331, and His358 each contribute to the 3-phosphoshikimate site. Position 190 (Gln190) interacts with phosphoenolpyruvate. The active-site Proton acceptor is the Glu331. Arg362, Arg404, and Lys428 together coordinate phosphoenolpyruvate.

The protein belongs to the EPSP synthase family. As to quaternary structure, monomer.

Its subcellular location is the cytoplasm. It carries out the reaction 3-phosphoshikimate + phosphoenolpyruvate = 5-O-(1-carboxyvinyl)-3-phosphoshikimate + phosphate. It functions in the pathway metabolic intermediate biosynthesis; chorismate biosynthesis; chorismate from D-erythrose 4-phosphate and phosphoenolpyruvate: step 6/7. Catalyzes the transfer of the enolpyruvyl moiety of phosphoenolpyruvate (PEP) to the 5-hydroxyl of shikimate-3-phosphate (S3P) to produce enolpyruvyl shikimate-3-phosphate and inorganic phosphate. The protein is 3-phosphoshikimate 1-carboxyvinyltransferase of Tropheryma whipplei (strain TW08/27) (Whipple's bacillus).